The following is a 270-amino-acid chain: Formamidopyrimidine-DNA glycosylase (270 aa).

Proline 2 acts as the Schiff-base intermediate with DNA in catalysis. The active-site Proton donor is the glutamate 3. Lysine 58 functions as the Proton donor; for beta-elimination activity in the catalytic mechanism. DNA is bound by residues histidine 90 and arginine 109. An FPG-type zinc finger spans residues 237-270 (KVYGKEGEQCECGHTIERYTLGGRSTFLCSSCQK). Catalysis depends on arginine 260, which acts as the Proton donor; for delta-elimination activity.

This sequence belongs to the FPG family. As to quaternary structure, monomer. Zn(2+) is required as a cofactor.

The enzyme catalyses Hydrolysis of DNA containing ring-opened 7-methylguanine residues, releasing 2,6-diamino-4-hydroxy-5-(N-methyl)formamidopyrimidine.. The catalysed reaction is 2'-deoxyribonucleotide-(2'-deoxyribose 5'-phosphate)-2'-deoxyribonucleotide-DNA = a 3'-end 2'-deoxyribonucleotide-(2,3-dehydro-2,3-deoxyribose 5'-phosphate)-DNA + a 5'-end 5'-phospho-2'-deoxyribonucleoside-DNA + H(+). In terms of biological role, involved in base excision repair of DNA damaged by oxidation or by mutagenic agents. Acts as a DNA glycosylase that recognizes and removes damaged bases. Has a preference for oxidized purines, such as 7,8-dihydro-8-oxoguanine (8-oxoG). Has AP (apurinic/apyrimidinic) lyase activity and introduces nicks in the DNA strand. Cleaves the DNA backbone by beta-delta elimination to generate a single-strand break at the site of the removed base with both 3'- and 5'-phosphates. This chain is Formamidopyrimidine-DNA glycosylase (mutM), found in Zymomonas mobilis subsp. mobilis (strain ATCC 31821 / ZM4 / CP4).